A 324-amino-acid polypeptide reads, in one-letter code: Probable acrylyl-CoA reductase AcuI (324 aa).

NADP(+) is bound by residues Y41, 156–159 (SGGV), 178–180 (SGR), R198, L242, I256, S267, and N313.

It belongs to the zinc-containing alcohol dehydrogenase family. Acrylyl-CoA reductase subfamily. As to quaternary structure, homodimer.

It localises to the cytoplasm. It carries out the reaction propanoyl-CoA + NADP(+) = acryloyl-CoA + NADPH + H(+). In terms of biological role, probably catalyzes the NADPH-dependent reduction of acrylyl-CoA to propanoyl-CoA. This Escherichia coli (strain K12) protein is Probable acrylyl-CoA reductase AcuI (acuI).